We begin with the raw amino-acid sequence, 133 residues long: ATP synthase epsilon chain, sodium ion specific (133 aa).

It belongs to the ATPase epsilon chain family. F-type ATPases have 2 components, CF(1) - the catalytic core - and CF(0) - the membrane proton channel. CF(1) has five subunits: alpha(3), beta(3), gamma(1), delta(1), epsilon(1). CF(0) has three main subunits: a, b and c.

The protein resides in the cell membrane. Its activity is regulated as follows. Inhibited by nitrate. Its function is as follows. Produces ATP from ADP in the presence of a sodium gradient across the membrane. In Acetobacterium woodii (strain ATCC 29683 / DSM 1030 / JCM 2381 / KCTC 1655 / WB1), this protein is ATP synthase epsilon chain, sodium ion specific (atpC).